Here is a 201-residue protein sequence, read N- to C-terminus: Transgelin (201 aa).

Alanine 2 bears the N-acetylalanine mark. One can recognise a Calponin-homology (CH) domain in the interval 24-137 (EELEERLVEW…RTLMALGSLA (114 aa)). A Phosphoserine modification is found at serine 166. Lysine 172 is subject to N6-acetyllysine. The Calponin-like repeat unit spans residues 175–200 (IGLQMGSNRGASQAGMTGYGRPRQII). Residue serine 181 is modified to Phosphoserine. An Omega-N-methylarginine modification is found at arginine 183.

It belongs to the calponin family.

It localises to the cytoplasm. In terms of biological role, actin cross-linking/gelling protein. This is Transgelin (Tagln) from Mus musculus (Mouse).